Reading from the N-terminus, the 330-residue chain is Aspartate--ammonia ligase (330 aa).

This sequence belongs to the class-II aminoacyl-tRNA synthetase family. AsnA subfamily.

It localises to the cytoplasm. It catalyses the reaction L-aspartate + NH4(+) + ATP = L-asparagine + AMP + diphosphate + H(+). Its pathway is amino-acid biosynthesis; L-asparagine biosynthesis; L-asparagine from L-aspartate (ammonia route): step 1/1. In Glaesserella parasuis serovar 5 (strain SH0165) (Haemophilus parasuis), this protein is Aspartate--ammonia ligase.